Here is a 637-residue protein sequence, read N- to C-terminus: 5-hmdU DNA kinase (637 aa).

The disordered stretch occupies residues 249–269 (AEKGVKRGKKGRKTSPVAKTL).

The protein belongs to the thymidylate kinase family. 5-hmdU DNA kinase subfamily.

It carries out the reaction 5-hydroxymethyl-dUMP in DNA + ATP = 5-phosphomethyl-dUMP in DNA + ADP + H(+). Its function is as follows. Phosphorylates 5-hydroxymethyluracil (5hmdU) into 5-phosphomethyl-2'-deoxyuridine (5- PmdU) on DNA as a step in the pathway leading to thymidine hypermodifications in the viral genome. The phosphate is added internally to the DNA polymer. As a final result of the pathway of hypermodification, alpha-glutamylthymidine (YdTMP) substitutes for about 20% of the thymidines in the viral DNA, the 80% left are dTMP. These modifications probably prevent degradation of viral genome by the host restriction-modification antiviral defense system. The protein is 5-hmdU DNA kinase of Bacillus phage SP10 (Bacillus phage SP-10).